The chain runs to 37 residues: Large ribosomal subunit protein bL36 (37 aa).

Belongs to the bacterial ribosomal protein bL36 family.

The sequence is that of Large ribosomal subunit protein bL36 from Nitrosococcus oceani (strain ATCC 19707 / BCRC 17464 / JCM 30415 / NCIMB 11848 / C-107).